We begin with the raw amino-acid sequence, 544 residues long: CTP synthase (544 aa).

Residues 1–265 (MARFIFITGG…DKAVLSAFGL (265 aa)) are amidoligase domain. CTP is bound at residue S13. Residue S13 coordinates UTP. 14–19 (SLGKGL) serves as a coordination point for ATP. Position 54 (Y54) interacts with L-glutamine. Position 71 (D71) interacts with ATP. 2 residues coordinate Mg(2+): D71 and E139. CTP is bound by residues 146 to 148 (DIE), 186 to 191 (KTKPTQ), and K222. UTP is bound by residues 186 to 191 (KTKPTQ) and K222. The Glutamine amidotransferase type-1 domain occupies 291–543 (TIGVVGKYVG…VAAALKQSRL (253 aa)). G355 contributes to the L-glutamine binding site. Residue C382 is the Nucleophile; for glutamine hydrolysis of the active site. L-glutamine is bound by residues 383-386 (LGMQ), E406, and R471. Residues H516 and E518 contribute to the active site.

It belongs to the CTP synthase family. Homotetramer.

The enzyme catalyses UTP + L-glutamine + ATP + H2O = CTP + L-glutamate + ADP + phosphate + 2 H(+). It carries out the reaction L-glutamine + H2O = L-glutamate + NH4(+). The catalysed reaction is UTP + NH4(+) + ATP = CTP + ADP + phosphate + 2 H(+). It functions in the pathway pyrimidine metabolism; CTP biosynthesis via de novo pathway; CTP from UDP: step 2/2. With respect to regulation, allosterically activated by GTP, when glutamine is the substrate; GTP has no effect on the reaction when ammonia is the substrate. The allosteric effector GTP functions by stabilizing the protein conformation that binds the tetrahedral intermediate(s) formed during glutamine hydrolysis. Inhibited by the product CTP, via allosteric rather than competitive inhibition. Catalyzes the ATP-dependent amination of UTP to CTP with either L-glutamine or ammonia as the source of nitrogen. Regulates intracellular CTP levels through interactions with the four ribonucleotide triphosphates. This Zymomonas mobilis subsp. mobilis (strain ATCC 31821 / ZM4 / CP4) protein is CTP synthase.